The sequence spans 192 residues: Cytidylate kinase (192 aa).

12–20 (GLAGSGTTT) provides a ligand contact to ATP.

The protein belongs to the cytidylate kinase family. Type 2 subfamily.

The protein resides in the cytoplasm. It carries out the reaction CMP + ATP = CDP + ADP. It catalyses the reaction dCMP + ATP = dCDP + ADP. In Pyrococcus horikoshii (strain ATCC 700860 / DSM 12428 / JCM 9974 / NBRC 100139 / OT-3), this protein is Cytidylate kinase (cmk).